Reading from the N-terminus, the 78-residue chain is Pancreatic polypeptide prohormone (78 aa).

The first 19 residues, 1–19 (LLLSTCVALLLQPPLGALG), serve as a signal peptide directing secretion. Tyr55 carries the post-translational modification Tyrosine amide.

Belongs to the NPY family.

The protein localises to the secreted. Hormone secreted by pancreatic cells that acts as a regulator of pancreatic and gastrointestinal functions probably by signaling through the G protein-coupled receptor NPY4R2. In Ovis aries (Sheep), this protein is Pancreatic polypeptide prohormone (PPY).